The chain runs to 170 residues: 3-hydroxydecanoyl-[acyl-carrier-protein] dehydratase (170 aa).

His69 is a catalytic residue.

This sequence belongs to the thioester dehydratase family. FabA subfamily. Homodimer.

The protein resides in the cytoplasm. It carries out the reaction a (3R)-hydroxyacyl-[ACP] = a (2E)-enoyl-[ACP] + H2O. The catalysed reaction is (3R)-hydroxydecanoyl-[ACP] = (2E)-decenoyl-[ACP] + H2O. It catalyses the reaction (2E)-decenoyl-[ACP] = (3Z)-decenoyl-[ACP]. Its pathway is lipid metabolism; fatty acid biosynthesis. Necessary for the introduction of cis unsaturation into fatty acids. Catalyzes the dehydration of (3R)-3-hydroxydecanoyl-ACP to E-(2)-decenoyl-ACP and then its isomerization to Z-(3)-decenoyl-ACP. Can catalyze the dehydratase reaction for beta-hydroxyacyl-ACPs with saturated chain lengths up to 16:0, being most active on intermediate chain length. The sequence is that of 3-hydroxydecanoyl-[acyl-carrier-protein] dehydratase from Idiomarina loihiensis (strain ATCC BAA-735 / DSM 15497 / L2-TR).